A 287-amino-acid chain; its full sequence is Isopentenyl-diphosphate Delta-isomerase 1, chloroplastic (287 aa).

A chloroplast-targeting transit peptide spans 1–51; it reads MTLLLNTTAKLYIAPRTLPFTSSSTFARSPFLRIPSLLKPLSPLTARVSLS. Lys90 provides a ligand contact to substrate. Mg(2+) contacts are provided by His94 and His106. The Nudix hydrolase domain maps to 104 to 256; that stretch reads LLHRAFSVFL…GLKLSPWFRL (153 aa). 2 residues coordinate substrate: Arg125 and Lys129. Cys141 is an active-site residue. Residue Ser142 coordinates substrate. Positions 142-172 match the Nudix box motif; the sequence is SHPLYRESELIDEESLGARNAAQRKLLDELG. The Mg(2+) site is built by Glu201 and Glu203. Residue Glu203 is part of the active site.

The protein belongs to the IPP isomerase type 1 family. Monomer. Mg(2+) is required as a cofactor. In terms of tissue distribution, mainly expressed in roots and trichomes and, to a lower extent, in leaves, flowers and stems.

The protein localises to the plastid. It localises to the chloroplast. The catalysed reaction is isopentenyl diphosphate = dimethylallyl diphosphate. It functions in the pathway isoprenoid biosynthesis; dimethylallyl diphosphate biosynthesis; dimethylallyl diphosphate from isopentenyl diphosphate: step 1/1. Its pathway is porphyrin-containing compound metabolism; chlorophyll biosynthesis. Its function is as follows. Catalyzes the 1,3-allylic rearrangement of the homoallylic substrate isopentenyl (IPP) to its highly electrophilic allylic isomer, dimethylallyl diphosphate (DMAPP). The protein is Isopentenyl-diphosphate Delta-isomerase 1, chloroplastic of Cannabis sativa (Hemp).